The sequence spans 240 residues: Proteasome subunit alpha (240 aa).

Belongs to the peptidase T1A family. As to quaternary structure, the 20S proteasome core is composed of 14 alpha and 14 beta subunits that assemble into four stacked heptameric rings, resulting in a barrel-shaped structure. The two inner rings, each composed of seven catalytic beta subunits, are sandwiched by two outer rings, each composed of seven alpha subunits. The catalytic chamber with the active sites is on the inside of the barrel. Has a gated structure, the ends of the cylinder being occluded by the N-termini of the alpha-subunits. Is capped at one or both ends by the proteasome regulatory ATPase, PAN.

It localises to the cytoplasm. With respect to regulation, the formation of the proteasomal ATPase PAN-20S proteasome complex, via the docking of the C-termini of PAN into the intersubunit pockets in the alpha-rings, triggers opening of the gate for substrate entry. Interconversion between the open-gate and close-gate conformations leads to a dynamic regulation of the 20S proteasome proteolysis activity. In terms of biological role, component of the proteasome core, a large protease complex with broad specificity involved in protein degradation. This is Proteasome subunit alpha from Metallosphaera sedula (strain ATCC 51363 / DSM 5348 / JCM 9185 / NBRC 15509 / TH2).